The chain runs to 237 residues: Uracil-DNA glycosylase (237 aa).

Catalysis depends on D77, which acts as the Proton acceptor.

The protein belongs to the uracil-DNA glycosylase (UDG) superfamily. UNG family.

Its subcellular location is the cytoplasm. It catalyses the reaction Hydrolyzes single-stranded DNA or mismatched double-stranded DNA and polynucleotides, releasing free uracil.. In terms of biological role, excises uracil residues from the DNA which can arise as a result of misincorporation of dUMP residues by DNA polymerase or due to deamination of cytosine. The sequence is that of Uracil-DNA glycosylase from Acinetobacter baumannii (strain AB307-0294).